Here is a 293-residue protein sequence, read N- to C-terminus: 33 kDa chaperonin (293 aa).

2 disulfides stabilise this stretch: cysteine 237–cysteine 239 and cysteine 271–cysteine 274.

It belongs to the HSP33 family. Post-translationally, under oxidizing conditions two disulfide bonds are formed involving the reactive cysteines. Under reducing conditions zinc is bound to the reactive cysteines and the protein is inactive.

The protein localises to the cytoplasm. In terms of biological role, redox regulated molecular chaperone. Protects both thermally unfolding and oxidatively damaged proteins from irreversible aggregation. Plays an important role in the bacterial defense system toward oxidative stress. The sequence is that of 33 kDa chaperonin from Haemophilus influenzae (strain PittEE).